The sequence spans 409 residues: Gamma-glutamyl phosphate reductase (409 aa).

This sequence belongs to the gamma-glutamyl phosphate reductase family.

It is found in the cytoplasm. It carries out the reaction L-glutamate 5-semialdehyde + phosphate + NADP(+) = L-glutamyl 5-phosphate + NADPH + H(+). Its pathway is amino-acid biosynthesis; L-proline biosynthesis; L-glutamate 5-semialdehyde from L-glutamate: step 2/2. Functionally, catalyzes the NADPH-dependent reduction of L-glutamate 5-phosphate into L-glutamate 5-semialdehyde and phosphate. The product spontaneously undergoes cyclization to form 1-pyrroline-5-carboxylate. This chain is Gamma-glutamyl phosphate reductase, found in Bartonella tribocorum (strain CIP 105476 / IBS 506).